Reading from the N-terminus, the 648-residue chain is Transcription termination factor FttA (648 aa).

The interval 9–76 (DDILKEIREI…ISVRPDPDIL (68 aa)) is KHa. The KHb stretch occupies residues 77–144 (LPPEKAEELI…WAPRVVRTPP (68 aa)). A metallo-beta-lactamase N-terminus region spans residues 185 to 395 (WIRITGLGGF…LVMESTYGGS (211 aa)). His253, His255, Asp257, His258, His341, and Asp364 together coordinate Zn(2+). The beta-Casp stretch occupies residues 396 to 589 (NDYQMPREEA…MEVHTIDGFS (194 aa)). A metallo-beta-lactamase C-terminus region spans residues 590 to 648 (GHADRRELMSYVARVRPRPERIITVHGEAHKCLDLSSSIHKKFGISTRAPNNLDAIRLK). His615 is a Zn(2+) binding site.

Belongs to the metallo-beta-lactamase superfamily. RNA-metabolizing metallo-beta-lactamase-like family. FttA subfamily. As to quaternary structure, homodimer. Probably interacts transiently with RNA polymerase (RNAP), (via at least the RNAP stalk subunits Rpo4 and Rpo7), interacts transiently with the Spt4-Spt5 complex. Requires Zn(2+) as cofactor.

Transcription termination is stimulated by the Spt4-Spt5 complex. Dipicolinic acid inhibits FttA-mediated termination in vitro and inhibits growth in vivo. Terminates transcription on the whole genome. Termination is linked to FttA-mediated RNA cleavage and does not require NTP hydrolysis. Cleaves endonucleolytically at the RNA exit channel of RNA polymerase (RNAP); the 5'-3' exonuclease activity of this protein degrades the nascent RNA released from RNAP. In terms of biological role, facilitates transcription termination; addition of this factor to stalled transcription elongation complexes (TEC) promotes nascent transcript cleavage and releases RNA polymerase (RNAP) from DNA in vitro. Transcription termination competes with productive transcription elongation. Termination is stimulated by C-rich transcripts and inhibited by G-rich transcripts; the Spt4-Spt5 complex enhances termination on C-less transcripts. Yields an approximately 100 nucleotide RNA, consistent with endonucleolytic cleavage at the RNA exit channel of RNAP. The protein is Transcription termination factor FttA of Thermococcus kodakarensis (strain ATCC BAA-918 / JCM 12380 / KOD1) (Pyrococcus kodakaraensis (strain KOD1)).